A 173-amino-acid polypeptide reads, in one-letter code: Archaemetzincin (173 aa).

H130 contacts Zn(2+). Catalysis depends on E131, which acts as the Proton acceptor. 6 residues coordinate Zn(2+): H134, H140, C141, C146, C165, and C168.

The protein belongs to the peptidase M54 family. As to quaternary structure, monomer. Zn(2+) serves as cofactor.

Functionally, probable zinc metalloprotease whose natural substrate is unknown. This Halobacterium salinarum (strain ATCC 29341 / DSM 671 / R1) protein is Archaemetzincin.